A 328-amino-acid polypeptide reads, in one-letter code: Methionyl-tRNA formyltransferase (328 aa).

Residue 110–113 (SLLP) coordinates (6S)-5,6,7,8-tetrahydrofolate.

It belongs to the Fmt family.

It carries out the reaction L-methionyl-tRNA(fMet) + (6R)-10-formyltetrahydrofolate = N-formyl-L-methionyl-tRNA(fMet) + (6S)-5,6,7,8-tetrahydrofolate + H(+). Its function is as follows. Attaches a formyl group to the free amino group of methionyl-tRNA(fMet). The formyl group appears to play a dual role in the initiator identity of N-formylmethionyl-tRNA by promoting its recognition by IF2 and preventing the misappropriation of this tRNA by the elongation apparatus. The polypeptide is Methionyl-tRNA formyltransferase (Prochlorococcus marinus (strain MIT 9515)).